Reading from the N-terminus, the 180-residue chain is Ribulose bisphosphate carboxylase small subunit 1A, chloroplastic (180 aa).

Residues 1 to 54 (MASSMLSSATMVASPAQATMVAPFNGLKSSAAFPATRKANNDITSITSNGGRVN) constitute a chloroplast transit peptide. Position 113 is a phosphoserine (serine 113).

The protein belongs to the RuBisCO small chain family. In terms of assembly, heterohexadecamer of 8 large and 8 small subunits.

The protein localises to the plastid. It localises to the chloroplast membrane. The protein resides in the chloroplast stroma. Functionally, ruBisCO catalyzes two reactions: the carboxylation of D-ribulose 1,5-bisphosphate, the primary event in carbon dioxide fixation, as well as the oxidative fragmentation of the pentose substrate. Both reactions occur simultaneously and in competition at the same active site. Although the small subunit is not catalytic it is essential for maximal activity. The sequence is that of Ribulose bisphosphate carboxylase small subunit 1A, chloroplastic (RBCS-1A) from Arabidopsis thaliana (Mouse-ear cress).